The chain runs to 444 residues: Trigger factor (444 aa).

Residues 166–251 enclose the PPIase FKBP-type domain; that stretch reads GDQVVIDFEG…VHAVKAPKPA (86 aa).

Belongs to the FKBP-type PPIase family. Tig subfamily.

It is found in the cytoplasm. It carries out the reaction [protein]-peptidylproline (omega=180) = [protein]-peptidylproline (omega=0). Its function is as follows. Involved in protein export. Acts as a chaperone by maintaining the newly synthesized protein in an open conformation. Functions as a peptidyl-prolyl cis-trans isomerase. This is Trigger factor (tig) from Rhodobacter capsulatus (strain ATCC BAA-309 / NBRC 16581 / SB1003).